The following is a 413-amino-acid chain: Aspartate aminotransferase, cytoplasmic (413 aa).

2 residues coordinate L-aspartate: glycine 39 and tryptophan 141. Serine 149 carries the post-translational modification Phosphoserine. Asparagine 195 provides a ligand contact to L-aspartate. Lysine 259 is modified (N6-(pyridoxal phosphate)lysine). Residue arginine 387 coordinates L-aspartate.

Belongs to the class-I pyridoxal-phosphate-dependent aminotransferase family. As to quaternary structure, homodimer. Pyridoxal 5'-phosphate serves as cofactor.

The protein resides in the cytoplasm. The catalysed reaction is L-aspartate + 2-oxoglutarate = oxaloacetate + L-glutamate. It catalyses the reaction L-cysteine + 2-oxoglutarate = 2-oxo-3-sulfanylpropanoate + L-glutamate. It carries out the reaction (2S)-2-aminobutanoate + 2-oxoglutarate = 2-oxobutanoate + L-glutamate. The enzyme catalyses 3-sulfino-L-alanine + 2-oxoglutarate = 3-sulfinopyruvate + L-glutamate. In terms of biological role, biosynthesis of L-glutamate from L-aspartate or L-cysteine. Important regulator of levels of glutamate, the major excitatory neurotransmitter of the vertebrate central nervous system. Acts as a scavenger of glutamate in brain neuroprotection. The aspartate aminotransferase activity is involved in hepatic glucose synthesis during development and in adipocyte glyceroneogenesis. Using L-cysteine as substrate, regulates levels of mercaptopyruvate, an important source of hydrogen sulfide. Mercaptopyruvate is converted into H(2)S via the action of 3-mercaptopyruvate sulfurtransferase (3MST). Hydrogen sulfide is an important synaptic modulator and neuroprotectant in the brain. This is Aspartate aminotransferase, cytoplasmic from Pan troglodytes (Chimpanzee).